The following is a 564-amino-acid chain: MAAPRPPPAISVSVSAPAFYAPQKKFAPVVAPKPKVNPFRPGDSEPPVAAGAQRAQMGRVGEIPPPPPEDFPLPPPPLIGEGDDSEGALGGAFPPPPPPMIEEPFPPAPLEEDIFPSPPPPLEEEGGPEAPTQLPPQPREKVCSIDLEIDSLSSLLDDMTKNDPFKARVSSGYVPPPVATPFVPKPSTKPAPGGTAPLPPWKTPSSSQPPPQPQAKPQVQLHVQPQAKPHVQPQPVSSANTQPRGPLSQAPTPAPKFAPVAPKFTPVVSKFSPGAPSGPGPQPNQKMVPPDAPSSVSTGSPQPPSFTYAQQKEKPLVQEKQHPQPPPAQNQNQVRSPGGPGPLTLKEVEELEQLTQQLMQDMEHPQRQSVAVNESCGKCNQPLARAQPAVRALGQLFHITCFTCHQCQQQLQGQQFYSLEGAPYCEGCYTDTLEKCNTCGQPITDRMLRATGKAYHPQCFTCVVCACPLEGTSFIVDQANQPHCVPDYHKQYAPRCSVCSEPIMPEPGRDETVRVVALDKNFHMKCYKCEDCGKPLSIEADDNGCFPLDGHVLCRKCHSARAQT.

Ala2 carries the post-translational modification N-acetylalanine. Residues 30–141 are disordered; sequence VAPKPKVNPF…TQLPPQPREK (112 aa). Composition is skewed to pro residues over residues 63–78 and 93–109; these read IPPP…PPPL and FPPP…PPAP. 4 positions are modified to phosphoserine: Ser117, Ser144, Ser170, and Ser171. Residues 162-344 are disordered; that stretch reads NDPFKARVSS…RSPGGPGPLT (183 aa). 2 stretches are compositionally biased toward pro residues: residues 174–189 and 197–214; these read VPPP…PSTK and PLPP…PQPQ. Thr180 carries the post-translational modification Phosphothreonine. Positions 234–243 are enriched in polar residues; the sequence is QPVSSANTQP. Arg244 carries the asymmetric dimethylarginine modification. The segment covering 255 to 275 has biased composition (low complexity); it reads PKFAPVAPKFTPVVSKFSPGA. Lys256 and Lys263 each carry N6-acetyllysine. The residue at position 265 (Thr265) is a Phosphothreonine. Lys270 bears the N6-acetyllysine mark. Residues Ser272 and Ser300 each carry the phosphoserine modification. Residues 294 to 310 show a composition bias toward polar residues; the sequence is SSVSTGSPQPPSFTYAQ. The span at 311–322 shows a compositional bias: basic and acidic residues; it reads QKEKPLVQEKQH. Ser336 is subject to Phosphoserine. LIM zinc-binding domains follow at residues 376 to 435, 436 to 495, and 496 to 562; these read CGKC…TLEK, CNTC…YAPR, and CSVC…SARA.

This sequence belongs to the zyxin/ajuba family. In terms of assembly, interacts, via the Pro-rich regions, with the EVH1 domains of ENAH, EVL and VASP. Interacts with the first LIM domain of TES. Interacts with SYNPO2.

The protein resides in the cytoplasm. It localises to the cytoskeleton. Its subcellular location is the cell junction. The protein localises to the focal adhesion. It is found in the nucleus. Functionally, adhesion plaque protein. Binds alpha-actinin and the CRP protein. Important for targeting TES and ENA/VASP family members to focal adhesions and for the formation of actin-rich structures. May be a component of a signal transduction pathway that mediates adhesion-stimulated changes in gene expression. This Mus musculus (Mouse) protein is Zyxin (Zyx).